We begin with the raw amino-acid sequence, 113 residues long: Large ribosomal subunit protein bL19 (113 aa).

The protein belongs to the bacterial ribosomal protein bL19 family.

This protein is located at the 30S-50S ribosomal subunit interface and may play a role in the structure and function of the aminoacyl-tRNA binding site. The chain is Large ribosomal subunit protein bL19 from Corynebacterium kroppenstedtii (strain DSM 44385 / JCM 11950 / CIP 105744 / CCUG 35717).